The sequence spans 925 residues: Probable dipeptidyl-aminopeptidase B (925 aa).

Residues 1 to 104 (MTPYRDVPPV…RHAQKKGPGM (104 aa)) form a disordered region. Topologically, residues 1–110 (MTPYRDVPPV…GPGMDRGMRR (110 aa)) are cytoplasmic. The segment covering 31–40 (ESGSSVSTTS) has biased composition (low complexity). Basic and acidic residues predominate over residues 55 to 72 (LSEKQPRGDDNEDALKDE). Residues 111–131 (ALLIAAGLLVSAWVAGLFVYI) form a helical; Signal-anchor for type II membrane protein membrane-spanning segment. At 132-925 (ATKSYKPASA…PKPNGKRRAA (794 aa)) the chain is on the vacuolar side. N-linked (GlcNAc...) asparagine glycosylation is present at Asn-369. Ser-773 serves as the catalytic Charge relay system. Asn-832 carries N-linked (GlcNAc...) asparagine glycosylation. Catalysis depends on charge relay system residues Asp-850 and His-883.

It belongs to the peptidase S9B family.

It is found in the vacuole membrane. It catalyses the reaction Release of an N-terminal dipeptide, Xaa-Yaa-|-Zaa-, from a polypeptide, preferentially when Yaa is Pro, provided Zaa is neither Pro nor hydroxyproline.. Its function is as follows. Type IV dipeptidyl-peptidase which removes N-terminal dipeptides sequentially from polypeptides having unsubstituted N-termini provided that the penultimate residue is proline. The sequence is that of Probable dipeptidyl-aminopeptidase B (DAPB) from Chaetomium globosum (strain ATCC 6205 / CBS 148.51 / DSM 1962 / NBRC 6347 / NRRL 1970) (Soil fungus).